The chain runs to 304 residues: Ribosomal RNA small subunit methyltransferase H (304 aa).

Residues 37–39 (GGH), D57, F85, D100, and H107 each bind S-adenosyl-L-methionine.

Belongs to the methyltransferase superfamily. RsmH family.

It localises to the cytoplasm. It carries out the reaction cytidine(1402) in 16S rRNA + S-adenosyl-L-methionine = N(4)-methylcytidine(1402) in 16S rRNA + S-adenosyl-L-homocysteine + H(+). Specifically methylates the N4 position of cytidine in position 1402 (C1402) of 16S rRNA. In Azobacteroides pseudotrichonymphae genomovar. CFP2, this protein is Ribosomal RNA small subunit methyltransferase H.